The primary structure comprises 329 residues: Lipoyl synthase (329 aa).

7 residues coordinate [4Fe-4S] cluster: Cys72, Cys77, Cys83, Cys98, Cys102, Cys105, and Ser313. The 221-residue stretch at 83-303 (CWSHGTATIM…QIGLKKGFFE (221 aa)) folds into the Radical SAM core domain.

It belongs to the radical SAM superfamily. Lipoyl synthase family. Requires [4Fe-4S] cluster as cofactor.

Its subcellular location is the cytoplasm. The catalysed reaction is [[Fe-S] cluster scaffold protein carrying a second [4Fe-4S](2+) cluster] + N(6)-octanoyl-L-lysyl-[protein] + 2 oxidized [2Fe-2S]-[ferredoxin] + 2 S-adenosyl-L-methionine + 4 H(+) = [[Fe-S] cluster scaffold protein] + N(6)-[(R)-dihydrolipoyl]-L-lysyl-[protein] + 4 Fe(3+) + 2 hydrogen sulfide + 2 5'-deoxyadenosine + 2 L-methionine + 2 reduced [2Fe-2S]-[ferredoxin]. It functions in the pathway protein modification; protein lipoylation via endogenous pathway; protein N(6)-(lipoyl)lysine from octanoyl-[acyl-carrier-protein]: step 2/2. In terms of biological role, catalyzes the radical-mediated insertion of two sulfur atoms into the C-6 and C-8 positions of the octanoyl moiety bound to the lipoyl domains of lipoate-dependent enzymes, thereby converting the octanoylated domains into lipoylated derivatives. The polypeptide is Lipoyl synthase (Legionella pneumophila (strain Corby)).